The chain runs to 144 residues: Maximins 3/H9 type 2 (144 aa).

Positions 1–18 (MNFKYIVAVSFLIASAYA) are cleaved as a signal peptide. Propeptides lie at residues 19–43 (RSVQNDEQSLSQRDVLEEESLREIR) and 74–123 (TAEE…KEKR). Isoleucine 143 is subject to Isoleucine amide.

Belongs to the bombinin family. As to expression, expressed by the skin glands.

The protein localises to the secreted. Its function is as follows. Maximin-3 shows antibacterial activity against both Gram-positive and Gram-negative bacteria. It also shows antimicrobial activity against the fungus C.albicans, but not against A.flavus nor P.uticale. It has little hemolytic activity. It possess a significant cytotoxicity against tumor cell lines. It possess a significant anti-HIV activity. It shows high spermicidal activity. Functionally, maximin-H9 shows antimicrobial activity against bacteria and against the fungus C.albicans. Shows strong hemolytic activity. The polypeptide is Maximins 3/H9 type 2 (Bombina maxima (Giant fire-bellied toad)).